The chain runs to 324 residues: NAD kinase (324 aa).

Asp89 serves as the catalytic Proton acceptor. NAD(+)-binding positions include Asp89–Gly90, Arg94, Asn163–Glu164, Asp193, and Thr204–Ser209.

Belongs to the NAD kinase family. A divalent metal cation is required as a cofactor.

It localises to the cytoplasm. The enzyme catalyses NAD(+) + ATP = ADP + NADP(+) + H(+). Functionally, involved in the regulation of the intracellular balance of NAD and NADP, and is a key enzyme in the biosynthesis of NADP. Catalyzes specifically the phosphorylation on 2'-hydroxyl of the adenosine moiety of NAD to yield NADP. The chain is NAD kinase from Nocardia farcinica (strain IFM 10152).